A 553-amino-acid polypeptide reads, in one-letter code: Dihydroxy-acid dehydratase (553 aa).

Mg(2+) is bound at residue Asp78. Cys119 contacts [2Fe-2S] cluster. 2 residues coordinate Mg(2+): Asp120 and Lys121. At Lys121 the chain carries N6-carboxylysine. Cys192 is a [2Fe-2S] cluster binding site. Residue Glu442 participates in Mg(2+) binding. Ser468 serves as the catalytic Proton acceptor.

This sequence belongs to the IlvD/Edd family. In terms of assembly, homodimer. [2Fe-2S] cluster is required as a cofactor. Mg(2+) serves as cofactor.

It catalyses the reaction (2R)-2,3-dihydroxy-3-methylbutanoate = 3-methyl-2-oxobutanoate + H2O. It carries out the reaction (2R,3R)-2,3-dihydroxy-3-methylpentanoate = (S)-3-methyl-2-oxopentanoate + H2O. The protein operates within amino-acid biosynthesis; L-isoleucine biosynthesis; L-isoleucine from 2-oxobutanoate: step 3/4. It participates in amino-acid biosynthesis; L-valine biosynthesis; L-valine from pyruvate: step 3/4. Functions in the biosynthesis of branched-chain amino acids. Catalyzes the dehydration of (2R,3R)-2,3-dihydroxy-3-methylpentanoate (2,3-dihydroxy-3-methylvalerate) into 2-oxo-3-methylpentanoate (2-oxo-3-methylvalerate) and of (2R)-2,3-dihydroxy-3-methylbutanoate (2,3-dihydroxyisovalerate) into 2-oxo-3-methylbutanoate (2-oxoisovalerate), the penultimate precursor to L-isoleucine and L-valine, respectively. This chain is Dihydroxy-acid dehydratase, found in Campylobacter hominis (strain ATCC BAA-381 / DSM 21671 / CCUG 45161 / LMG 19568 / NCTC 13146 / CH001A).